The following is a 187-amino-acid chain: MTADHNRALHDAPTARGGEVRQPDGDYFNALQTEVNDKGFLVTSTEDLFQWARTGSLWWMTFGLACCAVEMIHVNMPRYDMERFGAAPRASPRQSDVMIVAGTLCNKMAPALRKVYDQMSDPKYVISMGSCANGGGYYHYSYSVVRGCDRIVPVDIYVPGCPPTAEALLYGVMQLQRKIRRSGTIER.

Positions 1-10 are enriched in basic and acidic residues; that stretch reads MTADHNRALH. The segment at 1-22 is disordered; the sequence is MTADHNRALHDAPTARGGEVRQ. Positions 66, 67, 131, and 161 each coordinate [4Fe-4S] cluster.

Belongs to the complex I 20 kDa subunit family. NDH-1 is composed of 14 different subunits. Subunits NuoB, C, D, E, F, and G constitute the peripheral sector of the complex. Requires [4Fe-4S] cluster as cofactor.

It is found in the cell inner membrane. The enzyme catalyses a quinone + NADH + 5 H(+)(in) = a quinol + NAD(+) + 4 H(+)(out). Its function is as follows. NDH-1 shuttles electrons from NADH, via FMN and iron-sulfur (Fe-S) centers, to quinones in the respiratory chain. Couples the redox reaction to proton translocation (for every two electrons transferred, four hydrogen ions are translocated across the cytoplasmic membrane), and thus conserves the redox energy in a proton gradient. The protein is NADH-quinone oxidoreductase subunit B of Erythrobacter litoralis (strain HTCC2594).